A 438-amino-acid chain; its full sequence is Adenylyltransferase and sulfurtransferase UBA4 (438 aa).

Residues glycine 81, aspartate 102, 109–113 (SNLHR), lysine 126, and 170–171 (DH) each bind ATP. The Zn(2+) site is built by cysteine 212 and cysteine 215. Cysteine 229 serves as the catalytic Glycyl thioester intermediate; for adenylyltransferase activity. Positions 290 and 293 each coordinate Zn(2+). One can recognise a Rhodanese domain in the interval 340–436 (NKKKHILIDV…WSDDVDSKIP (97 aa)). Residue cysteine 396 is the Cysteine persulfide intermediate; for sulfurtransferase activity of the active site.

The protein in the N-terminal section; belongs to the HesA/MoeB/ThiF family. UBA4 subfamily. The cofactor is Zn(2+).

It is found in the cytoplasm. Its subcellular location is the cytosol. The protein operates within tRNA modification; 5-methoxycarbonylmethyl-2-thiouridine-tRNA biosynthesis. In terms of biological role, plays a central role in 2-thiolation of mcm(5)S(2)U at tRNA wobble positions of cytosolic tRNA(Lys), tRNA(Glu) and tRNA(Gln). Acts by mediating the C-terminal thiocarboxylation of sulfur carrier URM1. Its N-terminus first activates URM1 as acyl-adenylate (-COAMP), then the persulfide sulfur on the catalytic cysteine is transferred to URM1 to form thiocarboxylation (-COSH) of its C-terminus. The reaction probably involves hydrogen sulfide that is generated from the persulfide intermediate and that acts as a nucleophile towards URM1. Subsequently, a transient disulfide bond is formed. Does not use thiosulfate as sulfur donor; NFS1 probably acting as a sulfur donor for thiocarboxylation reactions. Prior mcm(5) tRNA modification by the elongator complex is required for 2-thiolation. May also be involved in protein urmylation. The sequence is that of Adenylyltransferase and sulfurtransferase UBA4 from Candida albicans (strain SC5314 / ATCC MYA-2876) (Yeast).